Reading from the N-terminus, the 384-residue chain is S-adenosylmethionine synthase (384 aa).

His-15 lines the ATP pocket. Asp-17 provides a ligand contact to Mg(2+). A K(+)-binding site is contributed by Glu-43. L-methionine-binding residues include Glu-56 and Gln-99. The flexible loop stretch occupies residues 99 to 109; it reads QSPDINQGVDR. ATP-binding positions include 164–166, 230–231, Asp-239, 245–246, Ala-262, and Lys-266; these read DAK, RF, and RK. Asp-239 serves as a coordination point for L-methionine. Lys-270 is a binding site for L-methionine.

Belongs to the AdoMet synthase family. Homotetramer; dimer of dimers. Requires Mg(2+) as cofactor. It depends on K(+) as a cofactor.

The protein localises to the cytoplasm. It carries out the reaction L-methionine + ATP + H2O = S-adenosyl-L-methionine + phosphate + diphosphate. It functions in the pathway amino-acid biosynthesis; S-adenosyl-L-methionine biosynthesis; S-adenosyl-L-methionine from L-methionine: step 1/1. Its function is as follows. Catalyzes the formation of S-adenosylmethionine (AdoMet) from methionine and ATP. The overall synthetic reaction is composed of two sequential steps, AdoMet formation and the subsequent tripolyphosphate hydrolysis which occurs prior to release of AdoMet from the enzyme. The polypeptide is S-adenosylmethionine synthase (Salmonella heidelberg (strain SL476)).